Here is a 609-residue protein sequence, read N- to C-terminus: Aminopeptidase ltah-1.1 (609 aa).

Residues 137–139 and 268–273 contribute to the substrate site; these read QCQ and PFGGME. His-297 contacts Zn(2+). Glu-298 (proton acceptor) is an active-site residue. 2 residues coordinate Zn(2+): His-301 and Glu-320. The active-site Proton donor is Tyr-387. Residue 564-566 coordinates substrate; it reads RMK.

Belongs to the peptidase M1 family. Zn(2+) serves as cofactor.

It localises to the cytoplasm. It carries out the reaction Release of N-terminal Arg and Lys from oligopeptides when P1' is not Pro. Also acts on arylamides of Arg and Lys.. Functionally, aminopeptidase which preferentially removes N-terminal Arg and Lys residues from peptides and proteins. The protein is Aminopeptidase ltah-1.1 of Caenorhabditis elegans.